The sequence spans 222 residues: uncharacterized protein (222 aa).

This is an uncharacterized protein from Fowlpox virus (strain NVSL) (FPV).